The chain runs to 73 residues: YFSYNDKVIKILEAEYLNTNHHFTAGTVISDKLEIACGSGILQVQKLQQESKKALNVEEFLRGTNILKATILK.

Belongs to the Fmt family.

It catalyses the reaction L-methionyl-tRNA(fMet) + (6R)-10-formyltetrahydrofolate = N-formyl-L-methionyl-tRNA(fMet) + (6S)-5,6,7,8-tetrahydrofolate + H(+). Attaches a formyl group to the free amino group of methionyl-tRNA(fMet). The formyl group appears to play a dual role in the initiator identity of N-formylmethionyl-tRNA by promoting its recognition by IF2 and preventing the misappropriation of this tRNA by the elongation apparatus. In Rickettsia australis, this protein is Methionyl-tRNA formyltransferase (fmt).